The sequence spans 206 residues: Ras-related protein Ral-A (206 aa).

Residue 21–28 (GSGGVGKS) participates in GTP binding. The Effector region signature appears at 43 to 51 (YEPTKADSY). GTP contacts are provided by residues 68–72 (DTAGQ) and 127–130 (NKSD). At Ser194 the chain carries Phosphoserine. The residue at position 203 (Cys203) is a Cysteine methyl ester. Cys203 carries the S-geranylgeranyl cysteine lipid modification. Residues 204–206 (CIL) constitute a propeptide, removed in mature form.

Belongs to the small GTPase superfamily. Ras family. Interacts (via effector domain) with RALBP1; during mitosis, recruits RALBP1 to the mitochondrion where it promotes DNM1L phosphorylation and mitochondrial fission. Interacts with EXOC2/Sec5 and EXOC8/Exo84; binding to EXOC2 and EXOC8 is mutually exclusive. Interacts with Clostridium exoenzyme C3. Interacts with RALGPS1. Interacts with LPAR1 and LPAR2. Interacts with GRK2 in response to LPAR1 activation. RALA and GRK2 binding to LPAR1 is mutually exclusive. Interacts with CDC42. Post-translationally, prenylation is essential for membrane localization. Phosphorylated. Phosphorylation at Ser-194 by AURKA/Aurora kinase A, during mitosis, induces RALA localization to the mitochondrion where it regulates mitochondrial fission.

It is found in the cell membrane. The protein localises to the cleavage furrow. The protein resides in the midbody. It localises to the midbody ring. Its subcellular location is the mitochondrion. The enzyme catalyses GTP + H2O = GDP + phosphate + H(+). Alternates between an inactive form bound to GDP and an active form bound to GTP. Activated by a guanine nucleotide-exchange factor (GEF) and inactivated by a GTPase-activating protein (GAP). In terms of biological role, multifunctional GTPase involved in a variety of cellular processes including gene expression, cell migration, cell proliferation, oncogenic transformation and membrane trafficking. Accomplishes its multiple functions by interacting with distinct downstream effectors. Acts as a GTP sensor for GTP-dependent exocytosis of dense core vesicles. Key regulator of LPAR1 signaling and competes with GRK2 for binding to LPAR1 thus affecting the signaling properties of the receptor. Required for anchorage-independent proliferation of transformed cells. The RALA-exocyst complex regulates integrin-dependent membrane raft exocytosis and growth signaling. During mitosis, supports the stabilization and elongation of the intracellular bridge between dividing cells. Cooperates with EXOC2 to recruit other components of the exocyst to the early midbody. During mitosis, also controls mitochondrial fission by recruiting to the mitochondrion RALBP1, which mediates the phosphorylation and activation of DNM1L by the mitotic kinase cyclin B-CDK1. This Mus musculus (Mouse) protein is Ras-related protein Ral-A (Rala).